Consider the following 274-residue polypeptide: Reaction center protein L chain (274 aa).

Over A2–V32 the chain is Cytoplasmic. A helical membrane pass occupies residues G33–A53. At A54–E83 the chain is on the periplasmic side. The helical transmembrane segment at G84 to K111 threads the bilayer. Over L112–G115 the chain is Cytoplasmic. Residues W116 to L139 form a helical membrane-spanning segment. At L140–Y170 the chain is on the periplasmic side. The (7R,8Z)-bacteriochlorophyll b site is built by H154 and H174. A helical membrane pass occupies residues N171 to V198. H191 is a Fe cation binding site. The Cytoplasmic segment spans residues A199–I225. F217 contributes to the a ubiquinone binding site. Residues G226–T249 form a helical membrane-spanning segment. H231 contributes to the Fe cation binding site. Residues I250–S274 are Periplasmic-facing.

It belongs to the reaction center PufL/M/PsbA/D family. Reaction center is composed of four bacteriochlorophylls, two bacteriopheophytins, two ubiquinones, one iron, and three highly hydrophobic polypeptide chains (designated L, M, and H).

Its subcellular location is the cellular chromatophore membrane. Its function is as follows. The reaction center is a membrane-bound complex that mediates the initial photochemical event in the electron transfer process of photosynthesis. This Blastochloris viridis (Rhodopseudomonas viridis) protein is Reaction center protein L chain (pufL).